Reading from the N-terminus, the 207-residue chain is MDLGGVRRRISLMARQHGPTAQRHVASPMTVDIARLGRRPGAMFELHDTVHSPARIGLELIAIDQGALLDLDLRVESVSEGVLVTGTVAAPTVGECARCLSPVRGRVQVALTELFAYPDSATDETTEEDEVGRVVDETIDLEQPIIDAVGLELPFSPVCRPDCPGLCPQCGVPLASEPGHRHEQIDPRWAKLVEMLGPESDTLRGER.

This sequence to M.leprae ML1660.

This is an uncharacterized protein from Mycobacterium tuberculosis (strain CDC 1551 / Oshkosh).